We begin with the raw amino-acid sequence, 398 residues long: Small ribosomal subunit protein uS3m (398 aa).

Belongs to the universal ribosomal protein uS3 family. In terms of assembly, component of the mitochondrial small ribosomal subunit (mt-SSU). Mature yeast 74S mitochondrial ribosomes consist of a small (37S) and a large (54S) subunit. The 37S small subunit contains a 15S ribosomal RNA (15S mt-rRNA) and 34 different proteins. The 54S large subunit contains a 21S rRNA (21S mt-rRNA) and 46 different proteins. uS3m, uS4m and uS5m form the narrow entry site of the mRNA channel.

It localises to the mitochondrion. Functionally, component of the mitochondrial ribosome (mitoribosome), a dedicated translation machinery responsible for the synthesis of mitochondrial genome-encoded proteins, including at least some of the essential transmembrane subunits of the mitochondrial respiratory chain. The mitoribosomes are attached to the mitochondrial inner membrane and translation products are cotranslationally integrated into the membrane. uS3m is essential for mitochondrial protein synthesis and required for the maturation of small ribosomal subunits. The chain is Small ribosomal subunit protein uS3m (VAR1) from Saccharomyces cerevisiae (strain ATCC 204508 / S288c) (Baker's yeast).